The chain runs to 86 residues: Large ribosomal subunit protein bL27 (86 aa).

Belongs to the bacterial ribosomal protein bL27 family.

The sequence is that of Large ribosomal subunit protein bL27 from Flavobacterium johnsoniae (strain ATCC 17061 / DSM 2064 / JCM 8514 / BCRC 14874 / CCUG 350202 / NBRC 14942 / NCIMB 11054 / UW101) (Cytophaga johnsonae).